The chain runs to 1074 residues: Formin-G (1074 aa).

Residues 34–423 (LQMQQGSKTY…DKINEFEKKI (390 aa)) enclose the GBD/FH3 domain. 2 disordered regions span residues 476-507 (QSIS…DIQS) and 549-639 (FTPT…NPSS). Residues 481 to 503 (SQDSSNNQKASSSSSNTSTLNDS) show a composition bias toward low complexity. A coiled-coil region spans residues 502-530 (DSDIQSIQSSLKEATLEIERLKLAIEEKM). Polar residues predominate over residues 549-561 (FTPTSPDISNDGQ). Positions 568–610 (APPPSPSPPPPISGGGAPPPPPPPPPPPSGGGAPPPPPPPPPS) are enriched in pro residues. In terms of domain architecture, FH1 spans 597-623 (GGGAPPPPPPPPPSGGKKAGAPGAPPT). In terms of domain architecture, FH2 spans 631–1031 (NKPVINPSSK…ASGDNGAVQN (401 aa)). Residues 914–971 (DINDLEKQFNISKNNCKKVLEANIPSSSKFQSTIGSFLEKTEIDIKNLKENQKNIVDS) are a coiled coil. The DAD domain occupies 1037–1073 (GADPLAALANAIKLGQTGLRKRPGPENSSGGSQLNLN). The interval 1053-1074 (TGLRKRPGPENSSGGSQLNLNK) is disordered. Residues 1062 to 1074 (ENSSGGSQLNLNK) show a composition bias toward polar residues.

It belongs to the formin homology family. Diaphanous subfamily. Interacts (via GBD/FH3 domain) with activated Rho-GTPases.

In terms of biological role, formins play an important role in the nucleation of actin and the formation of linear actin filaments. The polypeptide is Formin-G (forG) (Dictyostelium discoideum (Social amoeba)).